The chain runs to 87 residues: Kappa 1a-bungarotoxin (87 aa).

A signal peptide spans 1–21 (MKTLLLTLVVVTIVCLDLGYT). 5 disulfide bridges follow: C24-C42, C35-C63, C48-C52, C67-C79, and C80-C85.

The protein belongs to the three-finger toxin family. Long-chain subfamily. Kappa-neurotoxin sub-subfamily. Homo- and heterodimer; non-covalently linked. As to expression, expressed by the venom gland.

It localises to the secreted. Functionally, postsynaptic neurotoxin that binds and inhibits neuronal nicotinic acetylcholine receptors (nAChR) with high affinity (IC(50)&lt;100 nM). Is a selective, and slowly reversible antagonist of alpha-3/CHRNA3-containing and some alpha-4/CHRNA4-containing AChRs. The protein is Kappa 1a-bungarotoxin of Bungarus candidus (Malayan krait).